Here is a 558-residue protein sequence, read N- to C-terminus: RNA N(6)-adenosine-methyltransferase METTL16 (558 aa).

The interval 17–20 (PPDF) is RNA-binding. Residues arginine 82, glycine 110, serine 114, glutamate 133, threonine 164, and asparagine 184 each contribute to the S-adenosyl-L-methionine site. The K-loop stretch occupies residues 163–167 (KTLLM). RNA-binding stretches follow at residues 199 to 211 (SRNPRRPPPSSVN), 250 to 254 (GKKCS), and 277 to 283 (QGRTMRW). A VCR 1 region spans residues 289-400 (FYDDVQVPSP…QLRELPRASD (112 aa)). The tract at residues 407 to 502 (EEEKNSQNSV…AGNLTAEKGQ (96 aa)) is disordered. Over residues 439–461 (EDVHLTADDELREESATKELSEH) the composition is skewed to basic and acidic residues. The span at 477 to 488 (NEGSSSAEQGAQ) shows a compositional bias: polar residues. Residues 511–558 (FLFKCLMNVKKEGNDVLVEMHWVEGQNRDLMNQLCTYLRNQVLRLVAS) form a VCR 2 region.

Belongs to the methyltransferase superfamily. METTL16/RlmF family.

The protein resides in the nucleus. The protein localises to the cytoplasm. It carries out the reaction adenosine in U6 snRNA + S-adenosyl-L-methionine = N(6)-methyladenosine in U6 snRNA + S-adenosyl-L-homocysteine + H(+). The enzyme catalyses an adenosine in mRNA + S-adenosyl-L-methionine = an N(6)-methyladenosine in mRNA + S-adenosyl-L-homocysteine + H(+). With respect to regulation, methyltransferase activity is autoinhibited by the K-loop region that blocks S-adenosyl-L-methionine-binding. Upon activation, K-loop changes conformation, allowing S-adenosyl-L-methionine-binding and subsequent methyltransferase activity. mRNA N6-adenosine-methyltransferase activity is inhibited by zinc. In terms of biological role, RNA N6-methyltransferase that methylates adenosine residues at the N(6) position of a subset of RNAs and is involved in S-adenosyl-L-methionine homeostasis by regulating expression of MAT2A transcripts. Able to N6-methylate a subset of mRNAs and U6 small nuclear RNAs (U6 snRNAs). In contrast to the METTL3-METTL14 heterodimer, only able to methylate a limited number of RNAs: requires both a 5'UACAGAGAA-3' nonamer sequence and a specific RNA structure. Plays a key role in S-adenosyl-L-methionine homeostasis by mediating N6-methylation of MAT2A mRNAs, altering splicing of MAT2A transcripts: in presence of S-adenosyl-L-methionine, binds the 3'-UTR region of MAT2A mRNA and specifically N6-methylates the first hairpin of MAT2A mRNA, impairing MAT2A splicing and protein expression. In S-adenosyl-L-methionine-limiting conditions, binds the 3'-UTR region of MAT2A mRNA but stalls due to the lack of a methyl donor, preventing N6-methylation and promoting expression of MAT2A. In addition to mRNAs, also able to mediate N6-methylation of U6 small nuclear RNA (U6 snRNA): specifically N6-methylates adenine in position 43 of U6 snRNAs. In Gallus gallus (Chicken), this protein is RNA N(6)-adenosine-methyltransferase METTL16 (METTL16).